Reading from the N-terminus, the 1218-residue chain is NACHT, LRR and PYD domains-containing protein 1 allele 2 (1218 aa).

The tract at residues 1–61 is disordered; it reads MEESQSKQES…SLPGWSSTSK (61 aa). Positions 7–29 are enriched in polar residues; it reads KQESNTRVAQHGSQQDVDPTFQT. The NACHT domain occupies 175 to 484; that stretch reads QLVIIEGAAG…EFFAAMSYIL (310 aa). 181-188 is an ATP binding site; that stretch reads GAAGIGKS. LRR repeat units follow at residues 343–364, 673–693, and 730–750; these read KERN…LTLC, NLEE…RSLC, and RLAE…RQLC. Residues 799–815 show a composition bias toward polar residues; that stretch reads TMPTENTDGEESLTSSK. A disordered region spans residues 799-842; that stretch reads TMPTENTDGEESLTSSKQQQQQSGDKHMEPLGTDDDFWGPSGPV. Residues 835–968 form a ZU5 region; the sequence is FWGPSGPVST…HFAVLENPSF (134 aa). Positions 835-1118 constitute an FIIND domain; the sequence is FWGPSGPVST…LRPALPRMAS (284 aa). A UPA region spans residues 969-1118; that stretch reads SPMGVLLRMI…LRPALPRMAS (150 aa). The 90-residue stretch at 1122–1211 folds into the CARD domain; the sequence is DAPALLHFVD…HLIMDLLEKS (90 aa).

The protein belongs to the NLRP family. As to quaternary structure, interacts (via LRR repeats) with BCL2 and BCL2L1 (via the loop between motifs BH4 and BH3). Interacts with NOD2; this interaction is enhanced in the presence of muramyl dipeptide (MDP) and increases IL1B release. Interacts with EIF2AK2/PKR; this interaction requires EIF2AK2 activity, is accompanied by EIF2AK2 autophosphorylation and promotes inflammasome assembly in response to danger-associated signals. Interacts with MEFV; this interaction targets Nlrp1a to degradation by autophagy, hence preventing excessive IL1B- and IL18-mediated inflammation. Interacts with DPP9; leading to inhibit activation of the inflammasome. DPP9 acts via formation of a ternary complex, composed of a DPP9 homodimer, one full-length NLRP1 protein, and one cleaved C-terminus of Nlrp1a (NACHT, LRR and PYD domains-containing protein 1a, C-terminus). Interacts with DPP8; leading to inhibit activation of the inflammasome, probably via formation of a ternary complex with DPP8. In terms of assembly, interacts with the C-terminal part of Nlrp1a (NACHT, LRR and PYD domains-containing protein 1a, C-terminus) in absence of pathogens and other damage-associated signals. Interacts with the N-terminal part of Nlrp1a (NACHT, LRR and PYD domains-containing protein 1a, N-terminus) in absence of pathogens and other damage-associated signals. Homomultimer; forms the Nlrp1a inflammasome polymeric complex, a filament composed of homopolymers of this form in response to pathogens and other damage-associated signals. The Nlrp1a inflammasome polymeric complex directly recruits pro-caspase-1 (proCASP1) independently of PYCARD/ASC. Interacts (via CARD domain) with CASP1 (via CARD domain); leading to CASP1 activation. In terms of processing, autocatalytically cleaved. Autocatalytic cleavage in FIIND region occurs constitutively, prior to activation signals, and is required for inflammasome activity (IL1B release), possibly by facilitating CASP1 binding. Both N- and C-terminal parts remain associated non-covalently. (Microbial infection) Cleavage by B.anthracis lethal toxin (LT) endopeptidase promotes ubiquitination and degradation of the N-terminal part, releasing the cleaved C-terminal part of the protein (NACHT, LRR and PYD domains-containing protein 1a, C-terminus), which polymerizes and forms the Nlrp1a inflammasome. Post-translationally, ubiquitinated in response to pathogen-associated signals, leading to its degradation by the proteasome and subsequent release of the cleaved C-terminal part of the protein (NACHT, LRR and PYD domains-containing protein 1a, C-terminus), which polymerizes and forms the Nlrp1a inflammasome.

It localises to the cytoplasm. It is found in the cytosol. The protein resides in the nucleus. Its subcellular location is the inflammasome. Activated by cleavage by B.anthracis lethal toxin (LT) endopeptidase. Cleavage by LT promotes ubiquitination and degradation of the N-terminal part, releasing the cleaved C-terminal part of the protein (NACHT, LRR and PYD domains-containing protein 1a, C-terminus), which polymerizes and forms the Nlrp1a inflammasome. Nlrp1a inflammasome is inhibited by DPP8 and DPP9, which sequester the C-terminal fragment of Nlrp1a (NACHT, LRR and PYD domains-containing protein 1a, C-terminus) in a ternary complex, thereby preventing Nlrp1a oligomerization and activation. Nlrp1a inflammasome is weakly activated by Val-boroPro (Talabostat, PT-100), an inhibitor of dipeptidyl peptidases DPP8 and DPP9. Val-boroPro relieves inhibition of DPP8 and/or DPP9 by promoting disruption of the ternary complex, releasing its C-terminal part from autoinhibition. Weakly activated by Toxoplasma gondii. Acts as the sensor component of the Nlrp1a inflammasome, which mediates inflammasome activation in response to various pathogen-associated signals, leading to subsequent pyroptosis. Inflammasomes are supramolecular complexes that assemble in the cytosol in response to pathogens and other damage-associated signals and play critical roles in innate immunity and inflammation. Acts as a recognition receptor (PRR): recognizes specific pathogens and other damage-associated signals, such as B.anthracis lethal toxin (LT) or Val-boroPro inhibitor, and mediates the formation of the inflammasome polymeric complex. In response to pathogen-associated signals, the N-terminal part of Nlrp1a is degraded by the proteasome, releasing the cleaved C-terminal part of the protein (NACHT, LRR and PYD domains-containing protein 1a, C-terminus), which polymerizes to initiate the formation of the inflammasome complex: the inflammasome directly recruits pro-caspase-1 (proCASP1) independently of PYCARD/ASC and promotes caspase-1 (CASP1) activation, which subsequently cleaves and activates inflammatory cytokines IL1B and IL18 and gasdermin-D (GSDMD), leading to pyroptosis. In the absence of GSDMD expression, the Nlrp1a inflammasome is able to recruit and activate CASP8, leading to activation of gasdermin-E (GSDME). In terms of biological role, constitutes the precursor of the Nlrp1a inflammasome, which mediates autoproteolytic processing within the FIIND domain to generate the N-terminal and C-terminal parts, which are associated non-covalently in absence of pathogens and other damage-associated signals. Its function is as follows. Regulatory part that prevents formation of the Nlrp1a inflammasome: in absence of pathogens and other damage-associated signals, interacts with the C-terminal part of Nlrp1a (NACHT, LRR and PYD domains-containing protein 1a, C-terminus), preventing activation of the Nlrp1a inflammasome. In response to pathogen-associated signals, this part is ubiquitinated by the N-end rule pathway and degraded by the proteasome, releasing the cleaved C-terminal part of the protein, which polymerizes and forms the Nlrp1a inflammasome. Functionally, constitutes the active part of the Nlrp1a inflammasome. In absence of pathogens and other damage-associated signals, interacts with the N-terminal part of Nlrp1a (NACHT, LRR and PYD domains-containing protein 1a, N-terminus), preventing activation of the Nlrp1a inflammasome. In response to pathogen-associated signals, the N-terminal part of Nlrp1a is degraded by the proteasome, releasing this form, which polymerizes to form the Nlrp1a inflammasome complex: the Nlrp1a inflammasome complex then directly recruits pro-caspase-1 (proCASP1) and promotes caspase-1 (CASP1) activation, leading to gasdermin-D (GSDMD) cleavage and subsequent pyroptosis. This Rattus norvegicus (Rat) protein is NACHT, LRR and PYD domains-containing protein 1 allele 2.